The chain runs to 500 residues: Glycerol kinase (500 aa).

Residue threonine 12 coordinates ADP. Residues threonine 12, threonine 13, and serine 14 each contribute to the ATP site. Residue threonine 12 participates in sn-glycerol 3-phosphate binding. Arginine 16 contacts ADP. Positions 82, 83, 135, and 245 each coordinate sn-glycerol 3-phosphate. Positions 82, 83, 135, 245, and 246 each coordinate glycerol. ADP is bound by residues threonine 267 and glycine 310. Residues threonine 267, glycine 310, glutamine 314, and glycine 411 each coordinate ATP. Residues glycine 411 and asparagine 415 each contribute to the ADP site.

The protein belongs to the FGGY kinase family. In terms of assembly, homotetramer and homodimer (in equilibrium).

It carries out the reaction glycerol + ATP = sn-glycerol 3-phosphate + ADP + H(+). The protein operates within polyol metabolism; glycerol degradation via glycerol kinase pathway; sn-glycerol 3-phosphate from glycerol: step 1/1. Its activity is regulated as follows. Activated by phosphorylation and inhibited by fructose 1,6-bisphosphate (FBP). Functionally, key enzyme in the regulation of glycerol uptake and metabolism. Catalyzes the phosphorylation of glycerol to yield sn-glycerol 3-phosphate. The protein is Glycerol kinase of Clostridium perfringens (strain 13 / Type A).